Consider the following 682-residue polypeptide: DNA-directed RNA polymerase subunit beta' (682 aa).

Residues Cys69, Cys71, Cys87, and Cys90 each coordinate Zn(2+). 3 residues coordinate Mg(2+): Asp489, Asp491, and Asp493.

It belongs to the RNA polymerase beta' chain family. RpoC1 subfamily. In plastids the minimal PEP RNA polymerase catalytic core is composed of four subunits: alpha, beta, beta', and beta''. When a (nuclear-encoded) sigma factor is associated with the core the holoenzyme is formed, which can initiate transcription. Requires Mg(2+) as cofactor. The cofactor is Zn(2+).

It is found in the plastid. It localises to the chloroplast. It carries out the reaction RNA(n) + a ribonucleoside 5'-triphosphate = RNA(n+1) + diphosphate. Its function is as follows. DNA-dependent RNA polymerase catalyzes the transcription of DNA into RNA using the four ribonucleoside triphosphates as substrates. The chain is DNA-directed RNA polymerase subunit beta' from Acorus gramineus (Dwarf sweet flag).